The following is a 143-amino-acid chain: General odorant-binding protein 28a (143 aa).

The first 21 residues, 1–21, serve as a signal peptide directing secretion; it reads MQSTPIILVAIVLLGAALVRA. 3 disulfide bridges follow: C38/C69, C65/C123, and C113/C132.

Expressed in antenna, mostly on the medial and posterior surface of the third antennal segment.

It is found in the secreted. This Drosophila melanogaster (Fruit fly) protein is General odorant-binding protein 28a (Obp28a).